Here is a 529-residue protein sequence, read N- to C-terminus: L-ornithine N(5)-monooxygenase (529 aa).

Residues 100–108 (EKQPQFAWH) and glutamine 119 each bind FAD. Lysine 124 contacts substrate. Valine 185 contacts FAD. 270–273 (NGQS) contributes to the NADP(+) binding site. Substrate contacts are provided by residues 309–312 (NEIF) and asparagine 339. An NADP(+)-binding site is contributed by 339–341 (NYG). Residue 493–495 (TLL) participates in FAD binding. Serine 496 is a binding site for substrate.

It belongs to the lysine N(6)-hydroxylase/L-ornithine N(5)-oxygenase family. As to quaternary structure, homotetramer. FAD serves as cofactor.

It catalyses the reaction L-ornithine + NADPH + O2 = N(5)-hydroxy-L-ornithine + NADP(+) + H2O. The enzyme catalyses L-ornithine + NADH + O2 = N(5)-hydroxy-L-ornithine + NAD(+) + H2O. It participates in siderophore biosynthesis. L-ornithine N(5)-monooxygenase; part of the gene cluster that mediates the biosynthesis of hydroxamate-containing siderophores that play a critical role in virulence. Cochliobolus heterostrophus produces extracellular coprogen-type siderophores including coprogen, neocoprogen I and neocoprogen II, as well as the intracellular siderophore ferricrocin. The role of extracellular siderophores is to supply iron to their producers in planta and the intracellular ferricrocin is required for intracellular iron distribution and storage with a crucial role in ascus and ascospore development. SIDA2 catalyzes the conversion of L-ornithine to N(5)-hydroxyornithine, the first step in the biosynthesis of all hydroxamate-containing siderophores. The assembly of extracellular coprogen-type siderophores is then performed by the nonribosomal peptide synthetase (NRPS) NPS6 whereas the intracellular siderophore ferricrocin is assembled by NPS2. This Cochliobolus heterostrophus (strain C4 / ATCC 48331 / race T) (Southern corn leaf blight fungus) protein is L-ornithine N(5)-monooxygenase.